The primary structure comprises 76 residues: Putative small nuclear ribonucleoprotein G-like protein 15 (76 aa).

The region spanning 4–76 (AHPPELKKFT…IIMLEALERV (73 aa)) is the Sm domain.

It belongs to the snRNP Sm proteins family.

Its subcellular location is the nucleus. Associated with snRNP U1, U2, U4/U6 and U5. This Homo sapiens (Human) protein is Putative small nuclear ribonucleoprotein G-like protein 15 (SNRPGP15).